Consider the following 461-residue polypeptide: Transforming growth factor beta-1-induced transcript 1 protein (461 aa).

Met1 bears the N-acetylmethionine mark. Positions 1-87 (MEDLDALLSD…PFSSSSGVLG (87 aa)) are disordered. Residues 1–200 (MEDLDALLSD…GCPSPPGQTS (200 aa)) are transcription activation. An interaction with PTK2B/PYK2 region spans residues 1 to 240 (MEDLDALLSD…CNKPIAGQVV (240 aa)). The short motif at 3–15 (DLDALLSDLETTT) is the LD motif 1 element. Position 33 is a phosphothreonine (Thr33). Position 38 is a phosphotyrosine (Tyr38). The span at 44-53 (TGSGESSGTT) shows a compositional bias: low complexity. Residue Tyr60 is modified to Phosphotyrosine. Residue Ser68 is modified to Phosphoserine. The segment at 83 to 136 (SGVLGNGLCELDRLLQELNATQFNITDEIMSQFPSSKMAEGEEKEDQSEDKSSP) is interaction with PTK2/FAK1. An LD motif 2 motif is present at residues 92–104 (ELDRLLQELNATQ). The segment at 116 to 154 (PSSKMAEGEEKEDQSEDKSSPTVPPSPFPAPSKPSATSA) is disordered. The span at 137 to 147 (TVPPSPFPAPS) shows a compositional bias: pro residues. Phosphoserine is present on residues Ser141, Ser164, and Ser186. The LD motif 3 signature appears at 157–168 (ELDRLMASLSDF). The interval 171–204 (QNHLPASGPPQPPAASPTREGCPSPPGQTSKGSL) is disordered. Thr188 is subject to Phosphothreonine. Ser194 carries the post-translational modification Phosphoserine. The short motif at 203–215 (SLDTMLGLLQSDL) is the LD motif 4 element. LIM zinc-binding domains lie at 226–285 (GLCG…RFSP), 286–343 (RCGF…QLFA), 344–403 (PRCQ…QRGS), and 404–461 (LCAT…KLFG). The residue at position 403 (Ser403) is a Phosphoserine. Residue Thr407 is modified to Phosphothreonine.

The protein belongs to the paxillin family. As to quaternary structure, homooligomer. Interacts with PPARG. Interacts with TRAF4. Interacts with CRIP2. Interacts with HSPB1. Interacts with ILK. Interacts with LIMS1 and LIMS2. Interacts with NCK2. Interacts with NUDT16L1. Interacts with PAK. Interacts with PTPN12. Interacts with TCF3. Interacts with TCF7L2. Interacts with VCL. Interacts (via LD motif 3) with GIT1. Also interacts with GIT2. Forms a complex with ARHGEF7. Interacts with AR/androgen receptor in a ligand-dependent manner. Interacts with CSK. Interacts with PTK2/FAK1 and PTK2B/PYK2. Interacts with SLC6A3. Interacts with SLC6A4. Interacts with NR3C1. Interacts with SMAD3. Interacts with MAPK15. Interacts with SRC. Interacts with LYN. Interacts with talin. Interacts (via LIM zinc-binding domain 2) with CBLC (via RING-type zinc finger); the interaction is direct and enhances CBLC E3 ubiquitin-protein ligase activity. Interacts with PARVA. Interacts with PXN. Phosphorylated by gonadotropin-releasing hormone-activated SRC. In terms of tissue distribution, ubiquitously expressed. Higher expression is detected in lung and spleen. Expression decreases during pregnancy in mammary glands. Expressed in all brain areas, with higher levels in cerebellum, prefrontal cortex and hypothalamus. Expressed in smooth muscle, myoepithelial cells and platelets (at protein level). Preferentially expressed in mesenchymal versus epithelial cells (at protein level).

Its subcellular location is the cell junction. It is found in the focal adhesion. The protein resides in the nucleus matrix. It localises to the cytoplasm. The protein localises to the cytoskeleton. In terms of biological role, functions as a molecular adapter coordinating multiple protein-protein interactions at the focal adhesion complex and in the nucleus. Links various intracellular signaling modules to plasma membrane receptors and regulates the Wnt and TGFB signaling pathways. May also regulate SLC6A3 and SLC6A4 targeting to the plasma membrane hence regulating their activity. In the nucleus, functions as a nuclear receptor coactivator regulating glucocorticoid, androgen, mineralocorticoid and progesterone receptor transcriptional activity. May play a role in the processes of cell growth, proliferation, migration, differentiation and senescence. May have a zinc-dependent DNA-binding activity. In Mus musculus (Mouse), this protein is Transforming growth factor beta-1-induced transcript 1 protein (Tgfb1i1).